We begin with the raw amino-acid sequence, 28 residues long: Phospholipase A2 2 (28 aa).

The protein belongs to the phospholipase A2 family. Group I subfamily. It depends on Ca(2+) as a cofactor. As to expression, expressed by the venom gland.

The protein resides in the secreted. It carries out the reaction a 1,2-diacyl-sn-glycero-3-phosphocholine + H2O = a 1-acyl-sn-glycero-3-phosphocholine + a fatty acid + H(+). Snake venom phospholipase A2 (PLA2) that inhibits neuromuscular transmission by blocking acetylcholine release from the nerve termini. PLA2 catalyzes the calcium-dependent hydrolysis of the 2-acyl groups in 3-sn-phosphoglycerides. The polypeptide is Phospholipase A2 2 (Micrurus nigrocinctus (Central American coral snake)).